The sequence spans 150 residues: MKPEAGDGRSGWRWVATFDLILRLAAIVATSTAVLAAMGKTFVVVVNGVACFYLLMSLPVSIFNIMRPGACPANRAVLTALDMVTVALVTAGALVAGILYLVHKAGDTHADWFSIWSQLDSLSYLAVLALILHVLLSGSILYKQALNIMF.

The Cytoplasmic segment spans residues 1 to 17 (MKPEAGDGRSGWRWVAT). The chain crosses the membrane as a helical span at residues 18–38 (FDLILRLAAIVATSTAVLAAM). Residues 39–41 (GKT) lie on the Extracellular side of the membrane. The chain crosses the membrane as a helical span at residues 42–62 (FVVVVNGVACFYLLMSLPVSI). The Cytoplasmic portion of the chain corresponds to 63–82 (FNIMRPGACPANRAVLTALD). The helical transmembrane segment at 83-103 (MVTVALVTAGALVAGILYLVH) threads the bilayer. Topologically, residues 104-121 (KAGDTHADWFSIWSQLDS) are extracellular. A helical membrane pass occupies residues 122-142 (LSYLAVLALILHVLLSGSILY). The Cytoplasmic portion of the chain corresponds to 143 to 150 (KQALNIMF).

It belongs to the Casparian strip membrane proteins (CASP) family. As to quaternary structure, homodimer and heterodimers.

It localises to the cell membrane. The polypeptide is CASP-like protein 2 (Picea sitchensis (Sitka spruce)).